Here is a 313-residue protein sequence, read N- to C-terminus: Monoglyceride lipase (313 aa).

A GXSXG motif is present at residues 121 to 125; sequence GHSMG. Ser123 acts as the Nucleophile in catalysis. Active-site charge relay system residues include Asp251 and His281.

Belongs to the AB hydrolase superfamily. Monoacylglycerol lipase family.

Its subcellular location is the lipid droplet. It localises to the cytoplasm. The protein localises to the endoplasmic reticulum. The protein resides in the mitochondrion outer membrane. The catalysed reaction is Hydrolyzes glycerol monoesters of long-chain fatty acids.. It catalyses the reaction a fatty acid ethyl ester + H2O = ethanol + a fatty acid + H(+). It carries out the reaction 1-(9Z-octadecenoyl)-glycerol + H2O = glycerol + (9Z)-octadecenoate + H(+). The enzyme catalyses 2-(9Z-octadecenoyl)-glycerol + H2O = glycerol + (9Z)-octadecenoate + H(+). The catalysed reaction is 1-hexadecanoylglycerol + H2O = glycerol + hexadecanoate + H(+). It catalyses the reaction 2-hexadecanoylglycerol + H2O = glycerol + hexadecanoate + H(+). It carries out the reaction ethyl hexadecanoate + H2O = ethanol + hexadecanoate + H(+). The enzyme catalyses ethyl (9Z)-octadecenoate + H2O = ethanol + (9Z)-octadecenoate + H(+). The catalysed reaction is ethyl (9Z)-hexadecenoate + H2O = (9Z)-hexadecenoate + ethanol + H(+). It catalyses the reaction ethyl octadecanoate + H2O = ethanol + octadecanoate + H(+). The protein operates within glycerolipid metabolism; triacylglycerol degradation. Converts monoacylglycerides (MAG) to free fatty acids and glycerol. Has a strong preference for monounsaturated monoglycerides. Required for efficient degradation of MAG, short-lived intermediates of glycerolipid metabolism which may also function as lipid signaling molecules. Controls inactivation of the signaling lipid N-palmitoylethanolamine (PEA). Involved in fatty acid ethyl ester (FAEE) catabolism. FAEEs are non-oxidative metabolites of ethanol that are transiently incorporated into lipid droplets (LDs). Their mobilization by LD-resident FAEE hydrolases facilitates a controlled metabolism of these potentially toxic lipid metabolites. The polypeptide is Monoglyceride lipase (YJU3) (Saccharomyces cerevisiae (strain ATCC 204508 / S288c) (Baker's yeast)).